Here is a 465-residue protein sequence, read N- to C-terminus: Pancreatic triacylglycerol lipase (465 aa).

A signal peptide spans 1-16; sequence MLMLWTFAVLLGAVAG. 2 cysteine pairs are disulfide-bonded: cysteine 20/cysteine 26 and cysteine 107/cysteine 118. Serine 169 serves as the catalytic Nucleophile. Aspartate 193 functions as the Charge relay system in the catalytic mechanism. The Ca(2+) site is built by glutamate 204, arginine 207, aspartate 209, and aspartate 212. Residues cysteine 254 and cysteine 278 are joined by a disulfide bond. Histidine 280 (charge relay system) is an active-site residue. 3 cysteine pairs are disulfide-bonded: cysteine 302/cysteine 313, cysteine 316/cysteine 321, and cysteine 449/cysteine 465. In terms of domain architecture, PLAT spans 355–465; that stretch reads WRYQVTVTLS…EDVLLTLSPC (111 aa).

This sequence belongs to the AB hydrolase superfamily. Lipase family. In terms of assembly, forms a 1:1 stoichiometric complex with (pro)colipase/CLPS. Pancreas.

Its subcellular location is the secreted. It catalyses the reaction a triacylglycerol + H2O = a diacylglycerol + a fatty acid + H(+). The catalysed reaction is 1,2,3-tri-(9Z-octadecenoyl)-glycerol + H2O = di-(9Z)-octadecenoylglycerol + (9Z)-octadecenoate + H(+). The enzyme catalyses 1,2,3-tributanoylglycerol + H2O = dibutanoylglycerol + butanoate + H(+). It carries out the reaction all-trans-retinyl hexadecanoate + H2O = all-trans-retinol + hexadecanoate + H(+). It catalyses the reaction 1,2-di-(9Z-octadecenoyl)-glycerol + H2O = (9Z-octadecenoyl)-glycerol + (9Z)-octadecenoate + H(+). With respect to regulation, inhibited by bile salts, is reactivated by (pro)colipase/CLPS. Its function is as follows. Plays an important role in fat metabolism. It preferentially splits the esters of long-chain fatty acids at positions 1 and 3, producing mainly 2-monoacylglycerol and free fatty acids, and shows considerably higher activity against insoluble emulsified substrates than against soluble ones. The protein is Pancreatic triacylglycerol lipase of Mus musculus (Mouse).